The sequence spans 277 residues: Diaminopimelate epimerase (277 aa).

Substrate contacts are provided by asparagine 13, glutamine 46, and asparagine 66. Cysteine 75 acts as the Proton donor in catalysis. Substrate-binding positions include 76-77 (GN), asparagine 160, asparagine 193, and 211-212 (ER). The active-site Proton acceptor is cysteine 220. 221 to 222 (GT) provides a ligand contact to substrate.

It belongs to the diaminopimelate epimerase family. Homodimer.

The protein localises to the cytoplasm. It catalyses the reaction (2S,6S)-2,6-diaminopimelate = meso-2,6-diaminopimelate. It functions in the pathway amino-acid biosynthesis; L-lysine biosynthesis via DAP pathway; DL-2,6-diaminopimelate from LL-2,6-diaminopimelate: step 1/1. Its function is as follows. Catalyzes the stereoinversion of LL-2,6-diaminopimelate (L,L-DAP) to meso-diaminopimelate (meso-DAP), a precursor of L-lysine and an essential component of the bacterial peptidoglycan. This chain is Diaminopimelate epimerase, found in Saccharophagus degradans (strain 2-40 / ATCC 43961 / DSM 17024).